Here is a 162-residue protein sequence, read N- to C-terminus: Large ribosomal subunit protein bL17 (162 aa).

The interval 118-162 (RAPAAAPEAEEKGEKKAAGKAEKAPKAAKAPKAEKKPAKKAAKAE) is disordered. Basic and acidic residues predominate over residues 126–162 (AEEKGEKKAAGKAEKAPKAAKAPKAEKKPAKKAAKAE).

It belongs to the bacterial ribosomal protein bL17 family. As to quaternary structure, part of the 50S ribosomal subunit. Contacts protein L32.

In Anaeromyxobacter dehalogenans (strain 2CP-C), this protein is Large ribosomal subunit protein bL17.